A 450-amino-acid chain; its full sequence is MKATKTTYQKDHMGLTPSQIVNELNRFIVGQEKAKKAVAIALRNRCRRKRVEGNLRNEIVPKNILMIGSTGVGKTEIARRLAKLTYSPFYKIEATKFTEVGYVGRDVESIIRDLVEIAVNTEKTLAKTEVDINAREQAIERILDSLVGKTSSSETREKFKEKILNGELDDTEIEISVADTTPVGGGSFEIPGMPGASMGVLNLGDVIGRALGGSKTKTKKMLVKDAMAIIIPEESEKLIDQEKIIQQAINLAENDGIVFIDEIDKIASTGSSGAKNAEISREGVQRDLLPLIEGTTVNTKYGPVKTDHILFIASGAFHIAKPSDLLPELQGRLPIRVELNSLTKDDMIKILLEPETSLIKQYSALIGTEDVYIAFTDSAIEKIADYAITVNLEVEDIGARRLHTILENLLEDISFEASEMKGRKITIDDKFVENQLSKIITNLDLAKFVL.

ATP contacts are provided by residues V29, 71–76 (GVGKTE), D261, E328, and R400.

The protein belongs to the ClpX chaperone family. HslU subfamily. In terms of assembly, a double ring-shaped homohexamer of HslV is capped on each side by a ring-shaped HslU homohexamer. The assembly of the HslU/HslV complex is dependent on binding of ATP.

Its subcellular location is the cytoplasm. Functionally, ATPase subunit of a proteasome-like degradation complex; this subunit has chaperone activity. The binding of ATP and its subsequent hydrolysis by HslU are essential for unfolding of protein substrates subsequently hydrolyzed by HslV. HslU recognizes the N-terminal part of its protein substrates and unfolds these before they are guided to HslV for hydrolysis. The chain is ATP-dependent protease ATPase subunit HslU from Rickettsia akari (strain Hartford).